An 80-amino-acid chain; its full sequence is Trefoil factor 3 (80 aa).

The signal sequence occupies residues 1–23 (MEARVLWLLVVVLVLGSSSLAVA). The P-type domain maps to 30-73 (NLCEVPPKDRVDCGYPEITSEQCVNRGCCFDSSIHGVPWCFKPL). Disulfide bonds link Cys32-Cys58, Cys42-Cys57, and Cys52-Cys69.

In terms of assembly, monomer. Homodimer; disulfide-linked.

The protein localises to the secreted. It localises to the extracellular space. Its subcellular location is the extracellular matrix. The protein resides in the cytoplasm. Functionally, involved in the maintenance and repair of the intestinal mucosa. Promotes the mobility of epithelial cells in healing processes (motogen). This Canis lupus familiaris (Dog) protein is Trefoil factor 3 (TFF3).